A 393-amino-acid chain; its full sequence is NADH-quinone oxidoreductase subunit D (393 aa).

This sequence belongs to the complex I 49 kDa subunit family. NDH-1 is composed of 14 different subunits. Subunits NuoB, C, D, E, F, and G constitute the peripheral sector of the complex.

The protein resides in the cell inner membrane. The catalysed reaction is a quinone + NADH + 5 H(+)(in) = a quinol + NAD(+) + 4 H(+)(out). Its function is as follows. NDH-1 shuttles electrons from NADH, via FMN and iron-sulfur (Fe-S) centers, to quinones in the respiratory chain. The immediate electron acceptor for the enzyme in this species is believed to be ubiquinone. Couples the redox reaction to proton translocation (for every two electrons transferred, four hydrogen ions are translocated across the cytoplasmic membrane), and thus conserves the redox energy in a proton gradient. This Ehrlichia ruminantium (strain Welgevonden) protein is NADH-quinone oxidoreductase subunit D.